A 279-amino-acid chain; its full sequence is Pantothenate synthetase (279 aa).

ATP is bound at residue 27 to 34; the sequence is MGYLHEGH. His-34 (proton donor) is an active-site residue. Residue Gln-58 coordinates (R)-pantoate. Residue Gln-58 coordinates beta-alanine. ATP is bound at residue 144 to 147; the sequence is GKKD. Gln-150 serves as a coordination point for (R)-pantoate. Residues Val-173 and 181-184 contribute to the ATP site; that span reads MSSR.

This sequence belongs to the pantothenate synthetase family. As to quaternary structure, homodimer.

The protein resides in the cytoplasm. It catalyses the reaction (R)-pantoate + beta-alanine + ATP = (R)-pantothenate + AMP + diphosphate + H(+). It functions in the pathway cofactor biosynthesis; (R)-pantothenate biosynthesis; (R)-pantothenate from (R)-pantoate and beta-alanine: step 1/1. Catalyzes the condensation of pantoate with beta-alanine in an ATP-dependent reaction via a pantoyl-adenylate intermediate. The protein is Pantothenate synthetase of Citrifermentans bemidjiense (strain ATCC BAA-1014 / DSM 16622 / JCM 12645 / Bem) (Geobacter bemidjiensis).